The primary structure comprises 265 residues: 3-methyl-2-oxobutanoate hydroxymethyltransferase (265 aa).

Asp-45 and Asp-84 together coordinate Mg(2+). Residues 45-46, Asp-84, and Lys-112 contribute to the 3-methyl-2-oxobutanoate site; that span reads DS. Glu-114 serves as a coordination point for Mg(2+). Residue Glu-181 is the Proton acceptor of the active site.

The protein belongs to the PanB family. As to quaternary structure, homodecamer; pentamer of dimers. It depends on Mg(2+) as a cofactor.

The protein localises to the cytoplasm. The catalysed reaction is 3-methyl-2-oxobutanoate + (6R)-5,10-methylene-5,6,7,8-tetrahydrofolate + H2O = 2-dehydropantoate + (6S)-5,6,7,8-tetrahydrofolate. Its pathway is cofactor biosynthesis; (R)-pantothenate biosynthesis; (R)-pantoate from 3-methyl-2-oxobutanoate: step 1/2. Its function is as follows. Catalyzes the reversible reaction in which hydroxymethyl group from 5,10-methylenetetrahydrofolate is transferred onto alpha-ketoisovalerate to form ketopantoate. The protein is 3-methyl-2-oxobutanoate hydroxymethyltransferase of Yersinia pseudotuberculosis serotype IB (strain PB1/+).